The primary structure comprises 177 residues: Cytochrome c-type biogenesis protein CcmE (177 aa).

The Cytoplasmic portion of the chain corresponds to 1–8 (MNPRRKSR). A helical; Signal-anchor for type II membrane protein transmembrane segment spans residues 9–29 (LKVVMAVLSGLAVAVGLTLYA). The Periplasmic segment spans residues 30–177 (LSQNIDLFYT…QISQPFGENK (148 aa)). Positions 131 and 135 each coordinate heme. The segment at 134-177 (NYMPPELGDQMKKQHQPMGISEADLKGKSERDATQISQPFGENK) is disordered. Residues 156-166 (ADLKGKSERDA) are compositionally biased toward basic and acidic residues. Residues 167–177 (TQISQPFGENK) are compositionally biased toward polar residues.

Belongs to the CcmE/CycJ family.

The protein localises to the cell inner membrane. In terms of biological role, heme chaperone required for the biogenesis of c-type cytochromes. Transiently binds heme delivered by CcmC and transfers the heme to apo-cytochromes in a process facilitated by CcmF and CcmH. This is Cytochrome c-type biogenesis protein CcmE from Glaesserella parasuis serovar 5 (strain SH0165) (Haemophilus parasuis).